The chain runs to 251 residues: Probable caffeoyl-CoA O-methyltransferase 3 (251 aa).

Residues Thr-61, Asp-83, 85-86 (GV), Ser-91, Asp-109, and Ala-138 each bind S-adenosyl-L-methionine. Asp-160 contributes to the a divalent metal cation binding site. S-adenosyl-L-methionine is bound at residue Asp-162. Residues Asp-186 and Asn-187 each coordinate a divalent metal cation.

This sequence belongs to the class I-like SAM-binding methyltransferase superfamily. Cation-dependent O-methyltransferase family. CCoAMT subfamily.

The enzyme catalyses (E)-caffeoyl-CoA + S-adenosyl-L-methionine = (E)-feruloyl-CoA + S-adenosyl-L-homocysteine + H(+). This Dictyostelium discoideum (Social amoeba) protein is Probable caffeoyl-CoA O-methyltransferase 3 (omt1).